The primary structure comprises 819 residues: Protein kinase C-binding protein NELL2 (819 aa).

The N-terminal stretch at methionine 1–glycine 24 is a signal peptide. N-linked (GlcNAc...) asparagine glycans are attached at residues asparagine 56, asparagine 228, asparagine 296, and asparagine 301. The Laminin G-like domain maps to threonine 58–cysteine 231. The VWFC 1 domain occupies arginine 275–lysine 334. The EGF-like 1 domain occupies glycine 400–glutamate 442. Intrachain disulfides connect cysteine 404–cysteine 416, cysteine 410–cysteine 425, and cysteine 427–cysteine 441. Ca(2+) contacts are provided by aspartate 443, isoleucine 444, and glutamate 446. The 42-residue stretch at aspartate 443–threonine 484 folds into the EGF-like 2; calcium-binding domain. Cystine bridges form between cysteine 447–cysteine 460, cysteine 454–cysteine 469, cysteine 471–cysteine 483, cysteine 489–cysteine 502, cysteine 496–cysteine 511, cysteine 513–cysteine 524, cysteine 528–cysteine 538, cysteine 532–cysteine 544, and cysteine 546–cysteine 555. Residues asparagine 462, threonine 463, and serine 466 each contribute to the Ca(2+) site. Positions glutamate 485 to lysine 525 constitute an EGF-like 3; calcium-binding domain. An N-linked (GlcNAc...) asparagine glycan is attached at asparagine 520. The EGF-like 4 domain maps to alanine 526–glutamate 556. O-linked (GlcNAc...) threonine glycosylation is present at threonine 551. Ca(2+) is bound by residues aspartate 558, isoleucine 559, and glutamate 561. The region spanning aspartate 558–glutamate 604 is the EGF-like 5; calcium-binding domain. 3 disulfide bridges follow: cysteine 562–cysteine 575, cysteine 569–cysteine 584, and cysteine 586–cysteine 603. Positions 577, 578, and 581 each coordinate Ca(2+). Ca(2+)-binding residues include aspartate 605, isoleucine 606, and glutamate 608. The EGF-like 6; calcium-binding domain occupies aspartate 605–threonine 640. 3 disulfides stabilise this stretch: cysteine 609-cysteine 622, cysteine 616-cysteine 631, and cysteine 633-cysteine 639. N-linked (GlcNAc...) asparagine glycosylation is present at asparagine 618. Residues asparagine 624, leucine 625, and glycine 628 each contribute to the Ca(2+) site. Asparagine 638 is a glycosylation site (N-linked (GlcNAc...) asparagine). VWFC domains are found at residues glycine 641–aspartate 696 and serine 701–valine 759.

In terms of assembly, homotrimer. Binds to PRKCB. Interacts with NICOL1; this interaction triggers epididymal differentiation. As to quaternary structure, binds to PRKCB. Widely expressed. Expressed in cortical astrocytes but not in neuron. In terms of tissue distribution, widely expressed in brain. High expression is observed in telencephalic and diencephalic glutamatergic neurons, while no expression is found in GABAergic and GNRH neurons.

The protein resides in the secreted. Its subcellular location is the cytoplasm. Functionally, plays multiple roles In neural tissues, regulates neuronal proliferation, survival, differentiation, polarization, as well as axon guidance and synaptic functions. Plays an important role in axon development during neuronal differentiation through the MAPK intracellular signaling pathway. Via binding to its receptor ROBO3, plays a role in axon guidance, functioning as a repulsive axon guidance cue that contributes to commissural axon guidance to the midline. Required for neuron survival through the modulation of MAPK signaling pathways too. Involved in the regulation of hypothalamic GNRH secretion and the control of puberty. In terms of biological role, epididymal-secreted protein that signals through a ROS1-pathway to regulate the epididymal initial segment (IS) maturation, sperm maturation and male fertility. Its function is as follows. Acts as an endogenous inhibitor of PRKCB in glia. This chain is Protein kinase C-binding protein NELL2 (Nell2), found in Rattus norvegicus (Rat).